The following is a 372-amino-acid chain: NADH-quinone oxidoreductase subunit D (372 aa).

Belongs to the complex I 49 kDa subunit family. In terms of assembly, NDH-1 is composed of 14 different subunits. Subunits NuoB, C, D, E, F, and G constitute the peripheral sector of the complex.

It localises to the cell inner membrane. It carries out the reaction a quinone + NADH + 5 H(+)(in) = a quinol + NAD(+) + 4 H(+)(out). Functionally, NDH-1 shuttles electrons from NADH, via FMN and iron-sulfur (Fe-S) centers, to quinones in the respiratory chain. The immediate electron acceptor for the enzyme in this species is believed to be ubiquinone. Couples the redox reaction to proton translocation (for every two electrons transferred, four hydrogen ions are translocated across the cytoplasmic membrane), and thus conserves the redox energy in a proton gradient. The polypeptide is NADH-quinone oxidoreductase subunit D (Desulfotalea psychrophila (strain LSv54 / DSM 12343)).